The primary structure comprises 156 residues: 6,7-dimethyl-8-ribityllumazine synthase (156 aa).

5-amino-6-(D-ribitylamino)uracil contacts are provided by residues Phe-22, 57–59, and 81–83; these read AYE and TVI. Position 86–87 (86–87) interacts with (2S)-2-hydroxy-3-oxobutyl phosphate; that stretch reads GT. Catalysis depends on His-89, which acts as the Proton donor. Phe-114 provides a ligand contact to 5-amino-6-(D-ribitylamino)uracil. Arg-128 contributes to the (2S)-2-hydroxy-3-oxobutyl phosphate binding site.

Belongs to the DMRL synthase family. In terms of assembly, forms an icosahedral capsid composed of 60 subunits, arranged as a dodecamer of pentamers.

It carries out the reaction (2S)-2-hydroxy-3-oxobutyl phosphate + 5-amino-6-(D-ribitylamino)uracil = 6,7-dimethyl-8-(1-D-ribityl)lumazine + phosphate + 2 H2O + H(+). It functions in the pathway cofactor biosynthesis; riboflavin biosynthesis; riboflavin from 2-hydroxy-3-oxobutyl phosphate and 5-amino-6-(D-ribitylamino)uracil: step 1/2. In terms of biological role, catalyzes the formation of 6,7-dimethyl-8-ribityllumazine by condensation of 5-amino-6-(D-ribitylamino)uracil with 3,4-dihydroxy-2-butanone 4-phosphate. This is the penultimate step in the biosynthesis of riboflavin. This chain is 6,7-dimethyl-8-ribityllumazine synthase, found in Serratia proteamaculans (strain 568).